The sequence spans 313 residues: S-methyl-5'-thioadenosine phosphorylase (313 aa).

Residues threonine 20, 68-69 (RH), and 101-102 (SA) each bind phosphate. Residue methionine 203 coordinates substrate. Residue serine 204 participates in phosphate binding. Residue 227–229 (DYD) coordinates substrate.

This sequence belongs to the PNP/MTAP phosphorylase family. MTAP subfamily. As to quaternary structure, homotrimer.

It localises to the cytoplasm. The protein resides in the nucleus. It catalyses the reaction S-methyl-5'-thioadenosine + phosphate = 5-(methylsulfanyl)-alpha-D-ribose 1-phosphate + adenine. It participates in amino-acid biosynthesis; L-methionine biosynthesis via salvage pathway; S-methyl-5-thio-alpha-D-ribose 1-phosphate from S-methyl-5'-thioadenosine (phosphorylase route): step 1/1. In terms of biological role, catalyzes the reversible phosphorylation of S-methyl-5'-thioadenosine (MTA) to adenine and 5-methylthioribose-1-phosphate. Involved in the breakdown of MTA, a major by-product of polyamine biosynthesis. Responsible for the first step in the methionine salvage pathway after MTA has been generated from S-adenosylmethionine. Has broad substrate specificity with 6-aminopurine nucleosides as preferred substrates. This Ajellomyces capsulatus (strain G186AR / H82 / ATCC MYA-2454 / RMSCC 2432) (Darling's disease fungus) protein is S-methyl-5'-thioadenosine phosphorylase.